Here is a 143-residue protein sequence, read N- to C-terminus: MFMGEYQHTIDAKGRMIVPAKFREGLGEQFVLTRGLDQCLFGYPMHEWKQIEEKLKALPLTKKDARAFTRFFFSGATECELDKQGRVNIASSLLNYAKLEKECVVIGVSNRIELWSKVIWEQYTEEQEDSFAEIAENMIGFDI.

2 consecutive SpoVT-AbrB domains span residues 5–47 (EYQH…PMHE) and 76–119 (ATEC…SKVI).

It belongs to the MraZ family. As to quaternary structure, forms oligomers.

The protein localises to the cytoplasm. It is found in the nucleoid. This Bacillus subtilis (strain 168) protein is Transcriptional regulator MraZ.